An 89-amino-acid chain; its full sequence is Acylphosphatase (89 aa).

One can recognise an Acylphosphatase-like domain in the interval 4–89; that stretch reads SRRFLVSGTV…EQPPEGFRVL (86 aa). Active-site residues include Arg-19 and Asn-37.

The protein belongs to the acylphosphatase family.

It catalyses the reaction an acyl phosphate + H2O = a carboxylate + phosphate + H(+). The chain is Acylphosphatase (acyP) from Alkalilimnicola ehrlichii (strain ATCC BAA-1101 / DSM 17681 / MLHE-1).